Here is a 296-residue protein sequence, read N- to C-terminus: Cyclin-dependent kinase 1 (296 aa).

A Protein kinase domain is found at 5–288; that stretch reads FQKLEKIGEG…AKNGLSHKYF (284 aa). ATP-binding positions include 11-19 and Lys34; that span reads IGEGTYGVV. Residue Asp130 is the Proton acceptor of the active site.

This sequence belongs to the protein kinase superfamily. CMGC Ser/Thr protein kinase family. CDC2/CDKX subfamily.

Its subcellular location is the nucleus. It carries out the reaction L-seryl-[protein] + ATP = O-phospho-L-seryl-[protein] + ADP + H(+). The enzyme catalyses L-threonyl-[protein] + ATP = O-phospho-L-threonyl-[protein] + ADP + H(+). Its function is as follows. Cyclin-dependent kinase that acts as a master regulator of the mitotic and meiotic cell cycles. This chain is Cyclin-dependent kinase 1, found in Encephalitozoon cuniculi (strain GB-M1) (Microsporidian parasite).